The following is a 90-amino-acid chain: WAP four-disulfide core domain protein 12 (90 aa).

The signal sequence occupies residues 1-23 (MGSSSFLVLMVSLALVTLVAVEG). Positions 27–74 (GIEKAGVCPADNVRCFKSDPPQCHTDQDCLGERKCCYLHCGFKCVIPV) constitute a WAP domain. Intrachain disulfides connect cysteine 34–cysteine 62, cysteine 41–cysteine 66, cysteine 49–cysteine 61, and cysteine 55–cysteine 70.

It localises to the secreted. Functionally, antibacterial protein. Putative acid-stable proteinase inhibitor. This Gorilla gorilla gorilla (Western lowland gorilla) protein is WAP four-disulfide core domain protein 12 (WFDC12).